A 392-amino-acid chain; its full sequence is Ribosomal RNA large subunit methyltransferase G (392 aa).

This sequence belongs to the methyltransferase superfamily. RlmG family.

It is found in the cytoplasm. It carries out the reaction guanosine(1835) in 23S rRNA + S-adenosyl-L-methionine = N(2)-methylguanosine(1835) in 23S rRNA + S-adenosyl-L-homocysteine + H(+). Its function is as follows. Specifically methylates the guanine in position 1835 (m2G1835) of 23S rRNA. In Colwellia psychrerythraea (strain 34H / ATCC BAA-681) (Vibrio psychroerythus), this protein is Ribosomal RNA large subunit methyltransferase G.